The primary structure comprises 299 residues: Lipoyl synthase (299 aa).

Residues cysteine 34, cysteine 39, cysteine 45, cysteine 60, cysteine 64, cysteine 67, and serine 273 each coordinate [4Fe-4S] cluster. The 217-residue stretch at 46–262 (WNKKHATVMI…KYVAYSKGFL (217 aa)) folds into the Radical SAM core domain.

The protein belongs to the radical SAM superfamily. Lipoyl synthase family. The cofactor is [4Fe-4S] cluster.

It localises to the cytoplasm. The enzyme catalyses [[Fe-S] cluster scaffold protein carrying a second [4Fe-4S](2+) cluster] + N(6)-octanoyl-L-lysyl-[protein] + 2 oxidized [2Fe-2S]-[ferredoxin] + 2 S-adenosyl-L-methionine + 4 H(+) = [[Fe-S] cluster scaffold protein] + N(6)-[(R)-dihydrolipoyl]-L-lysyl-[protein] + 4 Fe(3+) + 2 hydrogen sulfide + 2 5'-deoxyadenosine + 2 L-methionine + 2 reduced [2Fe-2S]-[ferredoxin]. The protein operates within protein modification; protein lipoylation via endogenous pathway; protein N(6)-(lipoyl)lysine from octanoyl-[acyl-carrier-protein]: step 2/2. Catalyzes the radical-mediated insertion of two sulfur atoms into the C-6 and C-8 positions of the octanoyl moiety bound to the lipoyl domains of lipoate-dependent enzymes, thereby converting the octanoylated domains into lipoylated derivatives. This Ehrlichia canis (strain Jake) protein is Lipoyl synthase.